A 384-amino-acid polypeptide reads, in one-letter code: Urea transporter 1 (384 aa).

Transmembrane regions (helical) follow at residues 61 to 81 (ISQV…AGLL), 85 to 105 (PWWA…ALLL), 111 to 131 (AIAA…MAVF), 138 to 158 (FWWL…FSSA), and 168 to 188 (LPVF…ATGH). N-linked (GlcNAc...) asparagine glycosylation is present at N206. 4 consecutive transmembrane segments (helical) span residues 250–270 (LMCL…LSLA), 279–299 (GLWG…FMAL), 305–325 (LLAL…THLM), and 327–347 (AVHL…FLLL).

This sequence belongs to the urea transporter family. In terms of assembly, homotrimer; each subunit contains a pore through which urea permeates. Identified in a complex with STOM. Expressed in brain, spleen, kidney, testis and lung, with highest levels in brain.

It is found in the cell membrane. It localises to the basolateral cell membrane. It catalyses the reaction urea(in) = urea(out). Its function is as follows. Mediates the transport of urea driven by a concentration gradient across the cell membrane. Mediates the transport of urea across the cell membranes of erythrocytes and the renal inner medullary collecting duct which is critical to the urinary concentrating mechanism. Facilitates water transport in erythrocytes. The protein is Urea transporter 1 (Slc14a1) of Rattus norvegicus (Rat).